Consider the following 158-residue polypeptide: MYHFSVSFFYKIMQQLAPGSFFISKLVLVATSKTSSTPSPVSALHSMYFLAPMALATCFASSMGTISSVAFSLKWASCLKSFFKPTRTIGASGQYRNASSAHFVLALISDSKLSTANPINIISAFEYENGRKRSYSSCPAVSQSVKDTFIPSTLQSVT.

This is an uncharacterized protein from Saccharomyces cerevisiae (strain ATCC 204508 / S288c) (Baker's yeast).